Here is a 362-residue protein sequence, read N- to C-terminus: Salactin (362 aa).

Over residues 1–10 the composition is skewed to acidic residues; that stretch reads MSDDTEDDSG. Positions 1-28 are disordered; the sequence is MSDDTEDDSGGESTADMEFGEQPAPLGV.

Forms dynamically unstable filaments. Monomers are added at the growing filament end. In vitro, salactin polymerizes in the presence of ATP and AMP-PNP but not in the presence of ADP, GTP, ATPgammaS or buffer alone.

It localises to the cytoplasm. Functionally, actin homolog which might be involved in partitioning DNA between daughter cells when chromosomal copy number is low. The sequence is that of Salactin from Halobacterium salinarum (strain ATCC 700922 / JCM 11081 / NRC-1) (Halobacterium halobium).